Here is a 350-residue protein sequence, read N- to C-terminus: Uroporphyrinogen decarboxylase (350 aa).

Residues 27–31 (RQAGR), F46, D76, Y152, S207, and H321 each bind substrate.

The protein belongs to the uroporphyrinogen decarboxylase family. As to quaternary structure, homodimer.

Its subcellular location is the cytoplasm. It catalyses the reaction uroporphyrinogen III + 4 H(+) = coproporphyrinogen III + 4 CO2. The protein operates within porphyrin-containing compound metabolism; protoporphyrin-IX biosynthesis; coproporphyrinogen-III from 5-aminolevulinate: step 4/4. Functionally, catalyzes the decarboxylation of four acetate groups of uroporphyrinogen-III to yield coproporphyrinogen-III. This chain is Uroporphyrinogen decarboxylase, found in Listeria welshimeri serovar 6b (strain ATCC 35897 / DSM 20650 / CCUG 15529 / CIP 8149 / NCTC 11857 / SLCC 5334 / V8).